We begin with the raw amino-acid sequence, 546 residues long: Probable protein kinase UbiB (546 aa).

The 379-residue stretch at 124-502 (DFEIKPLASA…HVRQGQSRYF (379 aa)) folds into the Protein kinase domain. Residues 130-138 (LASASIAQV) and lysine 153 contribute to the ATP site. Aspartate 288 (proton acceptor) is an active-site residue. Transmembrane regions (helical) follow at residues 501 to 521 (YFLG…VSRP) and 522 to 542 (EWGL…FVGW).

Belongs to the ABC1 family. UbiB subfamily.

It is found in the cell inner membrane. Its pathway is cofactor biosynthesis; ubiquinone biosynthesis [regulation]. Its function is as follows. Is probably a protein kinase regulator of UbiI activity which is involved in aerobic coenzyme Q (ubiquinone) biosynthesis. This chain is Probable protein kinase UbiB, found in Shigella sonnei (strain Ss046).